The sequence spans 418 residues: cAMP-dependent protein kinase type II-beta regulatory subunit (418 aa).

Residues 2–153 (SIEIPAGLTE…RLQEACKDIL (152 aa)) are dimerization and phosphorylation. Residues 48–57 (TARFGHEGRT) show a composition bias toward basic and acidic residues. The segment at 48–96 (TARFGHEGRTWGDLGAAAGGGTPSKGVNFAEEPMQSDSEDGEEEEAAPA) is disordered. The residue at position 69 (Thr-69) is a Phosphothreonine. Phosphoserine occurs at positions 83, 85, and 114. The segment covering 84–94 (DSEDGEEEEAA) has biased composition (acidic residues). 3',5'-cyclic AMP contacts are provided by residues 154 to 275 (LFKN…ESLP), Glu-223, Arg-232, 276 to 418 (FLKS…EPTA), Glu-352, and Arg-361.

It belongs to the cAMP-dependent kinase regulatory chain family. The inactive form of the enzyme is composed of two regulatory chains and two catalytic chains. Activation by cAMP produces two active catalytic monomers and a regulatory dimer that binds four cAMP molecules. Interacts with PRKACA and PRKACB. Interacts with the phosphorylated form of PJA2. Forms a complex composed of PRKAR2B, GSK3B and GSKIP through GSKIP interaction; facilitates PKA-induced phosphorylation and regulates GSK3B activity. Phosphorylated by the activated catalytic chain. As to expression, four types of regulatory chains are found: I-alpha, I-beta, II-alpha, and II-beta. Their expression varies among tissues and is in some cases constitutive and in others inducible.

It localises to the cytoplasm. The protein localises to the cell membrane. In terms of biological role, regulatory subunit of the cAMP-dependent protein kinases involved in cAMP signaling in cells. Type II regulatory chains mediate membrane association by binding to anchoring proteins, including the MAP2 kinase. The chain is cAMP-dependent protein kinase type II-beta regulatory subunit (PRKAR2B) from Homo sapiens (Human).